A 255-amino-acid polypeptide reads, in one-letter code: NAD kinase (255 aa).

D44 acts as the Proton acceptor in catalysis. NAD(+) is bound by residues 44–45 (DG), H49, 114–115 (NE), D144, A152, 155–160 (SAYNLS), and Q216.

The protein belongs to the NAD kinase family. A divalent metal cation serves as cofactor.

The protein resides in the cytoplasm. The enzyme catalyses NAD(+) + ATP = ADP + NADP(+) + H(+). Functionally, involved in the regulation of the intracellular balance of NAD and NADP, and is a key enzyme in the biosynthesis of NADP. Catalyzes specifically the phosphorylation on 2'-hydroxyl of the adenosine moiety of NAD to yield NADP. In Rickettsia rickettsii (strain Iowa), this protein is NAD kinase.